A 292-amino-acid chain; its full sequence is MTAAAPTLAQALDEATGQLTGAGITADAARADTRLLAAHACQVAPGDLDTCLAGPVPPRFWHYVRRRLTREPAERIVGHAYFMGHRFDLAPGVFVPKPETEEITRDAIARLEALVRRGTTAPLVVDLCAGPGTMAVTLARHVPAARVLGIELSQAAARAARRNARGTGARIVQGDARDAFPELSGTVDLVVTNPPYIPIGLRTSAPEVLEHDPPLALWAGEEGLGMIRAMERTAARLLAPGGVLLLEHGSYQLASVPALFRATGRWSHASSRPTCNDGCLTAVRNHTCAPPA.

An S-adenosyl-L-methionine-binding site is contributed by 128 to 132; that stretch reads CAGPG.

This sequence belongs to the protein N5-glutamine methyltransferase family.

It carries out the reaction 4-amino-L-phenylalanine + S-adenosyl-L-methionine = 4-methylamino-L-phenylalanine + S-adenosyl-L-homocysteine + H(+). The enzyme catalyses 4-methylamino-L-phenylalanine + S-adenosyl-L-methionine = 4-dimethylamino-L-phenylalanine + S-adenosyl-L-homocysteine + H(+). Its pathway is antibiotic biosynthesis. In terms of biological role, involved in pristinamycin I biosynthesis. Catalyzes the SAM-dependent methylation of 4-amino-L-phenylalanine (PAPA) to 4-methylamino-L-phenylalanine (MMPAPA), and of MMPAPA to 4-dimethylamino-L-phenylalanine (DMPAPA). The protein is 4-amino-L-phenylalanine/4-methylamino-L-phenylalanine methyltransferase of Streptomyces pristinaespiralis.